Consider the following 208-residue polypeptide: Vacuolar ATPase assembly protein VMA12 (208 aa).

Ala2 carries the N-acetylalanine modification. Transmembrane regions (helical) follow at residues 146–166 (LVIT…CTYL) and 179–199 (VLAA…VMVR).

Accessory component of the multisubunit proton-transporting vacuolar (V)-ATPase protein pump.

The protein localises to the cytoplasmic vesicle. It is found in the COPI-coated vesicle membrane. Its subcellular location is the endoplasmic reticulum-Golgi intermediate compartment membrane. It localises to the endoplasmic reticulum membrane. In terms of biological role, accessory component of the proton-transporting vacuolar (V)-ATPase protein pump involved in intracellular iron homeostasis. In aerobic conditions, required for intracellular iron homeostasis, thus triggering the activity of Fe(2+) prolyl hydroxylase (PHD) enzymes, and leading to HIF1A hydroxylation and subsequent proteasomal degradation. Necessary for endolysosomal acidification and lysosomal degradation. May be involved in Golgi homeostasis. Binds 20(S)-hydroxycholesterol (20(S)-OHC). The chain is Vacuolar ATPase assembly protein VMA12 from Homo sapiens (Human).